Reading from the N-terminus, the 484-residue chain is Transmembrane protein 161B (484 aa).

The helical transmembrane segment at 108 to 128 (LVDFTVAATVVYLITELYFCV) threads the bilayer. Asn136 is a glycosylation site (N-linked (GlcNAc...) asparagine). 2 consecutive transmembrane segments (helical) span residues 137–157 (ISVVWSLLVLAFVMKILFSLT) and 170–190 (SLCITFAFFFFVKAMAILIVT). A glycan (N-linked (GlcNAc...) asparagine) is linked at Asn204. The next 4 membrane-spanning stretches (helical) occupy residues 229-249 (FKLILALLCALIGAFLTFPGL), 266-286 (VTQTLLHINFLAPLIMVLLWV), 368-388 (VFYYLCVIALQYIAPLVMLLH), and 456-476 (LSFFTWWIAACLFSTSLFGLF).

Belongs to the TMEM161 family.

The protein resides in the cell membrane. Functionally, essential for maintaining normal cardiac rhythm in the developing heart and for neonatal survival. Inhibits potassium and calcium currents in the cardiomyocytes, this assists in timely action potential repolarization and thereby maintains normal cardiac rhythm. The chain is Transmembrane protein 161B (tmem161b) from Danio rerio (Zebrafish).